Here is an 82-residue protein sequence, read N- to C-terminus: Exodeoxyribonuclease 7 small subunit (82 aa).

This sequence belongs to the XseB family. Heterooligomer composed of large and small subunits.

It localises to the cytoplasm. The enzyme catalyses Exonucleolytic cleavage in either 5'- to 3'- or 3'- to 5'-direction to yield nucleoside 5'-phosphates.. In terms of biological role, bidirectionally degrades single-stranded DNA into large acid-insoluble oligonucleotides, which are then degraded further into small acid-soluble oligonucleotides. This chain is Exodeoxyribonuclease 7 small subunit, found in Mycobacterium avium (strain 104).